A 428-amino-acid polypeptide reads, in one-letter code: MIETLITFIIIFGIIVAIHEYGHLWWAKRSGILVREYAVGMGPKIFAHQAKDGTLYTIRILPLGGYVRLAGWGDDKTEIKKGQAASLVVSKSEVVNPEAENSVSNIVRRINLSEHVELEEAIPMLITEYDFEKELFIEGEVFGEIKRYSVDHDATIIEEDGTEVRIAPLDVQYQSAGVFHKMLTNFGGPLNNFILGIIAFIVLTFVQGGVPSTTNAIGQVEKGTPAYNAGLKAGDKIEAVNGTKTADWNNVVTEISGSKGKELKLEVSRSGKSETLSVTPKKMDGSYRVGIMQSMKTGFFDKITGGFVQAGQSATAIFKALGSLIARPSLDKLGGPVAIYQLSGQAARAGFPAIVYLLAMLSINLGIVNLFPIPVLDGGKIVLNIIEAIRGKALSQEKESIITMVGVVFMLVLFVAVTWNDILRAFVN.

Residue His-19 coordinates Zn(2+). Residue Glu-20 is part of the active site. Position 23 (His-23) interacts with Zn(2+). 3 helical membrane-spanning segments follow: residues 188–210, 354–376, and 401–423; these read GPLNNFILGIIAFIVLTFVQGGV, IVYLLAMLSINLGIVNLFPIPVL, and IITMVGVVFMLVLFVAVTWNDIL. The region spanning 188–282 is the PDZ domain; it reads GPLNNFILGI…SETLSVTPKK (95 aa).

This sequence belongs to the peptidase M50B family. It depends on Zn(2+) as a cofactor.

It is found in the cell membrane. The protein is Putative zinc metalloprotease LL2128 of Lactococcus lactis subsp. lactis (strain IL1403) (Streptococcus lactis).